A 319-amino-acid polypeptide reads, in one-letter code: Type II secretion system protein C 2 (319 aa).

Residues 1 to 42 (MARVVFRDARIYLIQWLTKIRHTLNQRQSLNTDKEHLRKIVR) lie on the Cytoplasmic side of the membrane. The helical transmembrane segment at 43 to 65 (GMFWLMLLIISAKVAHSLWRYFS) threads the bilayer. Residues 66–319 (FSAEYTAVSP…ARHDISIALR (254 aa)) lie on the Periplasmic side of the membrane.

Belongs to the GSP C family. In terms of assembly, interacts with outer cell membrane protein GspD2 in the periplasm.

Its subcellular location is the cell inner membrane. Functionally, involved in a type II secretion system (T2SS, formerly general secretion pathway, GSP) for the export of folded proteins across the outer membrane. The protein is Type II secretion system protein C 2 (gspC2) of Escherichia coli O78:H11 (strain H10407 / ETEC).